A 109-amino-acid chain; its full sequence is MLDELRCEACSAGAIGLTSEEQQQLLSELDGWALIHRDGIAQLEKRYRFKNFKQAWAFSNQIAELAEQEFHNPAILLEWGNVTVTWWSHSIKGLHKNDFICAAKCDALT.

The protein belongs to the pterin-4-alpha-carbinolamine dehydratase family.

The catalysed reaction is (4aS,6R)-4a-hydroxy-L-erythro-5,6,7,8-tetrahydrobiopterin = (6R)-L-erythro-6,7-dihydrobiopterin + H2O. This is Putative pterin-4-alpha-carbinolamine dehydratase from Vibrio cholerae serotype O1 (strain ATCC 39315 / El Tor Inaba N16961).